Consider the following 129-residue polypeptide: Large ribosomal subunit protein eL32 (129 aa).

It belongs to the eukaryotic ribosomal protein eL32 family.

The protein is Large ribosomal subunit protein eL32 (rpl32e) of Methanosarcina mazei (strain ATCC BAA-159 / DSM 3647 / Goe1 / Go1 / JCM 11833 / OCM 88) (Methanosarcina frisia).